A 115-amino-acid chain; its full sequence is Large ribosomal subunit protein bL19 (115 aa).

It belongs to the bacterial ribosomal protein bL19 family.

This protein is located at the 30S-50S ribosomal subunit interface and may play a role in the structure and function of the aminoacyl-tRNA binding site. The polypeptide is Large ribosomal subunit protein bL19 (Streptococcus pneumoniae (strain JJA)).